Here is a 526-residue protein sequence, read N- to C-terminus: Peptide chain release factor 3 (526 aa).

A tr-type G domain is found at 9 to 277 (DKRRTFAIIS…GIVEWAPKPL (269 aa)). Residues 18-25 (SHPDAGKT), 86-90 (DTPGH), and 140-143 (NKCD) contribute to the GTP site.

This sequence belongs to the TRAFAC class translation factor GTPase superfamily. Classic translation factor GTPase family. PrfC subfamily.

It localises to the cytoplasm. Functionally, increases the formation of ribosomal termination complexes and stimulates activities of RF-1 and RF-2. It binds guanine nucleotides and has strong preference for UGA stop codons. It may interact directly with the ribosome. The stimulation of RF-1 and RF-2 is significantly reduced by GTP and GDP, but not by GMP. The polypeptide is Peptide chain release factor 3 (Shewanella frigidimarina (strain NCIMB 400)).